A 317-amino-acid polypeptide reads, in one-letter code: Ribosomal protein L11 methyltransferase (317 aa).

Residues Thr-158, Gly-179, Asp-201, and Asn-244 each contribute to the S-adenosyl-L-methionine site.

Belongs to the methyltransferase superfamily. PrmA family.

The protein localises to the cytoplasm. The enzyme catalyses L-lysyl-[protein] + 3 S-adenosyl-L-methionine = N(6),N(6),N(6)-trimethyl-L-lysyl-[protein] + 3 S-adenosyl-L-homocysteine + 3 H(+). Methylates ribosomal protein L11. The protein is Ribosomal protein L11 methyltransferase of Streptococcus pyogenes serotype M6 (strain ATCC BAA-946 / MGAS10394).